The sequence spans 149 residues: Large ribosomal subunit protein bL9 (149 aa).

The protein belongs to the bacterial ribosomal protein bL9 family.

In terms of biological role, binds to the 23S rRNA. The chain is Large ribosomal subunit protein bL9 from Histophilus somni (strain 129Pt) (Haemophilus somnus).